A 152-amino-acid chain; its full sequence is 6,7-dimethyl-8-ribityllumazine synthase (152 aa).

Residues phenylalanine 21, 55–57, and 79–81 contribute to the 5-amino-6-(D-ribitylamino)uracil site; these read AFE and AVI. 84–85 contacts (2S)-2-hydroxy-3-oxobutyl phosphate; that stretch reads AT. Histidine 87 (proton donor) is an active-site residue. Residue phenylalanine 112 coordinates 5-amino-6-(D-ribitylamino)uracil. Arginine 126 serves as a coordination point for (2S)-2-hydroxy-3-oxobutyl phosphate.

It belongs to the DMRL synthase family. Forms an icosahedral capsid composed of 60 subunits, arranged as a dodecamer of pentamers.

The catalysed reaction is (2S)-2-hydroxy-3-oxobutyl phosphate + 5-amino-6-(D-ribitylamino)uracil = 6,7-dimethyl-8-(1-D-ribityl)lumazine + phosphate + 2 H2O + H(+). The protein operates within cofactor biosynthesis; riboflavin biosynthesis; riboflavin from 2-hydroxy-3-oxobutyl phosphate and 5-amino-6-(D-ribitylamino)uracil: step 1/2. Catalyzes the formation of 6,7-dimethyl-8-ribityllumazine by condensation of 5-amino-6-(D-ribitylamino)uracil with 3,4-dihydroxy-2-butanone 4-phosphate. This is the penultimate step in the biosynthesis of riboflavin. The polypeptide is 6,7-dimethyl-8-ribityllumazine synthase (Exiguobacterium sibiricum (strain DSM 17290 / CCUG 55495 / CIP 109462 / JCM 13490 / 255-15)).